The chain runs to 454 residues: Probable mitochondrial saccharopine dehydrogenase-like oxidoreductase At5g39410 (454 aa).

M1 carries the post-translational modification N-acetylmethionine. The segment at 215-234 (RRSRPRRPRPTICGPPAKGP) is disordered.

Belongs to the saccharopine dehydrogenase family.

The protein resides in the mitochondrion membrane. The protein is Probable mitochondrial saccharopine dehydrogenase-like oxidoreductase At5g39410 of Arabidopsis thaliana (Mouse-ear cress).